A 392-amino-acid chain; its full sequence is Succinyl-diaminopimelate desuccinylase (392 aa).

Zn(2+) is bound at residue H71. D73 is an active-site residue. Zn(2+) is bound at residue D102. E144 functions as the Proton acceptor in the catalytic mechanism. E145, E173, and H362 together coordinate Zn(2+).

The protein belongs to the peptidase M20A family. DapE subfamily. Homodimer. Zn(2+) serves as cofactor. Requires Co(2+) as cofactor.

The catalysed reaction is N-succinyl-(2S,6S)-2,6-diaminopimelate + H2O = (2S,6S)-2,6-diaminopimelate + succinate. Its pathway is amino-acid biosynthesis; L-lysine biosynthesis via DAP pathway; LL-2,6-diaminopimelate from (S)-tetrahydrodipicolinate (succinylase route): step 3/3. Functionally, catalyzes the hydrolysis of N-succinyl-L,L-diaminopimelic acid (SDAP), forming succinate and LL-2,6-diaminopimelate (DAP), an intermediate involved in the bacterial biosynthesis of lysine and meso-diaminopimelic acid, an essential component of bacterial cell walls. This Rhodospirillum rubrum (strain ATCC 11170 / ATH 1.1.1 / DSM 467 / LMG 4362 / NCIMB 8255 / S1) protein is Succinyl-diaminopimelate desuccinylase.